The sequence spans 885 residues: MFEKFTEGAIKVIMLSQEEARRMGHNFVGTEQLLLGIIGQRHGIGARALKKQKVTLKKARREIELYIGRGTGFVASEIPFTPRAKRVLEMAVHEGKDLGQNFVGTEHILLALISESDGVAMRTLDKLGVNIPKLRNLILMYIEENQEEILRPLTQAEKFLLEREKKGSSTPTLDEYSENISKEAVDGKLDPVIGRDKEIHEVIKVLARRRKNNPVLIGEPGVGKTAVAEGLAQLIIAEKAPDFLDGNLLMALDLGSILAGTKYRGEFEERIKRIVEEVQNDSAIILVIDEIHTLVGAGAAEGAVDAANILKPALARGKFRCIGATTIDEYRKYIERDPALERRFQPVHVKEPTVGVTIEILLGLRSKFEEHHTLSYHDKAVEQAAILADKFIADRFLPDKAIDVLDEAGSRVRLENRRLPRGMKRLLKELQDTLRDKEESIKEHDFDIAKQLVDHEMEVRTHIRIMKQSILTNETLGLARKEIDTVLEGDVAEVIAGWTGIPVNKISDSESKRLLTMEETLHERLIGQHHAIVSVSKAIRRARVGLRNPDRPIASFIFAGPTGVGKTELTKALSEYMFGNEDSMIRLDMSEYMEKHTVAKLIGSPPGYVGYNEGGQLTEAVQTKPYSVVLLDEVEKAHPDVFNLLLQILDDGRLTDSKGRTIDFRNTMIIMTTNLGAKIIEKESGIKPKTKQDKPAFRIDESGCLGWEPTPEPIKDSALFEKVTELVNEELKEFFRPEFLNRIDEIIVFNHLTKYDIWEICGLMVKQLQKRLEEKELTLEVDVSVRNLLTEEGYDPVYGARPLRRAVMRLLEDTLAQQCLSKPLYPGTILRVSRVKEEGTLASYTNDVKVEIDYRRVDPRLLEQAEEKKEQNQEETKQNILKTDA.

A Clp R domain is found at 2 to 145 (FEKFTEGAIK…NLILMYIEEN (144 aa)). Repeat stretches follow at residues 5–70 (FTEG…IGRG) and 80–145 (FTPR…IEEN). ATP contacts are provided by residues 218–225 (GEPGVGKT) and 560–567 (GPTGVGKT). The interval 864–885 (QAEEKKEQNQEETKQNILKTDA) is disordered.

This sequence belongs to the ClpA/ClpB family.

It is found in the plastid. The protein localises to the chloroplast. In terms of biological role, may interact with a ClpP-like protease involved in degradation of denatured proteins in the chloroplast. This is ATP-dependent Clp protease ATP-binding subunit ClpA homolog (clpC) from Trieres chinensis (Marine centric diatom).